We begin with the raw amino-acid sequence, 503 residues long: METLQHLILHDMPNSEEIEAVKSGDHTLTYKGYRKRINQLANAMLQKGIQKGDRVALLCKNGHPASTVMFAALEIGAVVVPVSWQLKPYEMTGILKASEPKAMFYGAEFKEILDEVLPELSSLCVTMETGTAYETSAEFEALFAGPDHLPETEMVSPDDTALLMFTSGTTGNPKRCMITHGGIYRYVKKSNSSIARMKGLRFLACHPIYHTSALICIMLGTFAETTFVFTKDQDPVHMLKVIEEEKIQTVMALPVFYTYLLEAWEKHQTDLSSLVILMTGGTKVPSSLISRYLDIGIPLAHGYGSTEAWGISTWTPDMGMDKAASAGKPVAGVKVKVEDPLTGEELPQGEIGEIVVHTPFLFKGYEDNPEATAKVLQNGWFRTGDSGYVDEDGFIFITGRYKDVIIYGGDNVYPDQVEEVIQQIPGILETAVVGIPDPLYGEKPKAFIVKNGGQRITEEDVIAFCKERLSAYKIPEVEFVNELPKNNLGKVKKDVLRNQAVHS.

This sequence belongs to the ATP-dependent AMP-binding enzyme family.

This Bacillus subtilis (strain 168) protein is Putative acyl--CoA ligase YdaB (ydaB).